Here is a 432-residue protein sequence, read N- to C-terminus: Adenylosuccinate synthetase (432 aa).

GTP-binding positions include 13–19 (GDEGKGK) and 41–43 (GHT). The active-site Proton acceptor is Asp-14. Asp-14 and Gly-41 together coordinate Mg(2+). IMP-binding positions include 14–17 (DEGK), 39–42 (NAGH), Thr-130, Arg-144, Gln-225, Thr-240, and Arg-304. His-42 serves as the catalytic Proton donor. Residue 300–306 (ATTGRRR) coordinates substrate. Residues Arg-306, 332-334 (KLD), and 415-417 (STG) contribute to the GTP site.

This sequence belongs to the adenylosuccinate synthetase family. As to quaternary structure, homodimer. Mg(2+) serves as cofactor.

The protein localises to the cytoplasm. The enzyme catalyses IMP + L-aspartate + GTP = N(6)-(1,2-dicarboxyethyl)-AMP + GDP + phosphate + 2 H(+). It functions in the pathway purine metabolism; AMP biosynthesis via de novo pathway; AMP from IMP: step 1/2. Its function is as follows. Plays an important role in the de novo pathway of purine nucleotide biosynthesis. Catalyzes the first committed step in the biosynthesis of AMP from IMP. The protein is Adenylosuccinate synthetase of Pectobacterium atrosepticum (strain SCRI 1043 / ATCC BAA-672) (Erwinia carotovora subsp. atroseptica).